The following is a 216-amino-acid chain: Imidazole glycerol phosphate synthase subunit HisH (216 aa).

Positions 2–216 (RVAIIDYGSG…LIANFLKWKP (215 aa)) constitute a Glutamine amidotransferase type-1 domain. C88 functions as the Nucleophile in the catalytic mechanism. Active-site residues include H196 and E198.

As to quaternary structure, heterodimer of HisH and HisF.

It is found in the cytoplasm. The catalysed reaction is 5-[(5-phospho-1-deoxy-D-ribulos-1-ylimino)methylamino]-1-(5-phospho-beta-D-ribosyl)imidazole-4-carboxamide + L-glutamine = D-erythro-1-(imidazol-4-yl)glycerol 3-phosphate + 5-amino-1-(5-phospho-beta-D-ribosyl)imidazole-4-carboxamide + L-glutamate + H(+). It carries out the reaction L-glutamine + H2O = L-glutamate + NH4(+). It functions in the pathway amino-acid biosynthesis; L-histidine biosynthesis; L-histidine from 5-phospho-alpha-D-ribose 1-diphosphate: step 5/9. In terms of biological role, IGPS catalyzes the conversion of PRFAR and glutamine to IGP, AICAR and glutamate. The HisH subunit catalyzes the hydrolysis of glutamine to glutamate and ammonia as part of the synthesis of IGP and AICAR. The resulting ammonia molecule is channeled to the active site of HisF. In Brucella abortus biovar 1 (strain 9-941), this protein is Imidazole glycerol phosphate synthase subunit HisH.